A 555-amino-acid chain; its full sequence is CTP synthase (555 aa).

The tract at residues Met-1–Leu-272 is amidoligase domain. Ser-19 is a binding site for CTP. Ser-19 contacts UTP. ATP is bound by residues Ser-20–Leu-25 and Asp-77. Mg(2+) is bound by residues Asp-77 and Glu-146. CTP-binding positions include Asp-153–Glu-155, Lys-193–Gln-198, and Lys-229. UTP contacts are provided by residues Lys-193–Gln-198 and Lys-229. In terms of domain architecture, Glutamine amidotransferase type-1 spans Thr-297–Ala-548. Gly-360 is an L-glutamine binding site. Cys-387 (nucleophile; for glutamine hydrolysis) is an active-site residue. Residues Leu-388 to Gln-391, Glu-411, and Arg-473 each bind L-glutamine. Catalysis depends on residues His-521 and Glu-523.

This sequence belongs to the CTP synthase family. Homotetramer.

The enzyme catalyses UTP + L-glutamine + ATP + H2O = CTP + L-glutamate + ADP + phosphate + 2 H(+). It catalyses the reaction L-glutamine + H2O = L-glutamate + NH4(+). It carries out the reaction UTP + NH4(+) + ATP = CTP + ADP + phosphate + 2 H(+). It functions in the pathway pyrimidine metabolism; CTP biosynthesis via de novo pathway; CTP from UDP: step 2/2. With respect to regulation, allosterically activated by GTP, when glutamine is the substrate; GTP has no effect on the reaction when ammonia is the substrate. The allosteric effector GTP functions by stabilizing the protein conformation that binds the tetrahedral intermediate(s) formed during glutamine hydrolysis. Inhibited by the product CTP, via allosteric rather than competitive inhibition. In terms of biological role, catalyzes the ATP-dependent amination of UTP to CTP with either L-glutamine or ammonia as the source of nitrogen. Regulates intracellular CTP levels through interactions with the four ribonucleotide triphosphates. This is CTP synthase from Streptomyces griseus subsp. griseus (strain JCM 4626 / CBS 651.72 / NBRC 13350 / KCC S-0626 / ISP 5235).